We begin with the raw amino-acid sequence, 1300 residues long: Zinc finger protein 536 (1300 aa).

2 disordered regions span residues 1 to 26 (MEEASLCLGVSSAEPEAEPHLSGPVL) and 47 to 77 (FPELHPRPNPEEKPPASLEEKAHVPMSGQPM). Positions 48–69 (PELHPRPNPEEKPPASLEEKAH) are enriched in basic and acidic residues. 6 C2H2-type zinc fingers span residues 130–152 (YPCPLCGKRFRFNSILSLHMRTH), 158–180 (FKCPYCDHRAAQKGNLKIHLRTH), 274–297 (FRCTFCKGKFKKREELDRHIRILH), 300–323 (YKCTLCDFAASQEEELISHVEKAH), 345–367 (FRCEVCGQVFSQAWFLKGHMRKH), and 373–395 (HCCQICGRRFKEPWFLKNHMKVH). Disordered regions lie at residues 584–604 (HSTKVGSQRDLPSKLDPLESS) and 650–739 (SRVH…QQPA). Basic and acidic residues predominate over residues 594-604 (LPSKLDPLESS). The C2H2-type 7 zinc-finger motif lies at 631 to 653 (TECPDCGRVFRTYHQVVVHSRVH). The segment covering 657–674 (RKGEEDGLHVGLDERRGS) has biased composition (basic and acidic residues). The span at 675-696 (GSDQESQSVSRSTTPGSSNVTE) shows a compositional bias: polar residues. C2H2-type zinc fingers lie at residues 751-773 (KDCPYCGKTFRTSHHLKVHLRIH) and 779-801 (YKCPHCDYAGTQSASLKYHLERH). Residues 802–826 (HRERQNGAGPLSGQPPNQDHKDEMS) form a disordered region. Serine 826 and serine 827 each carry phosphoserine. A compositionally biased stretch (polar residues) spans 856–880 (SQQWTSGVLSSGDHSGQATGMSSEV). 3 disordered regions span residues 856-893 (SQQWTSGVLSSGDHSGQATGMSSEVPSDALKGTDLPSK), 937-985 (KDKA…PDAA), and 1124-1260 (SGAS…SLDK). 2 stretches are compositionally biased toward basic and acidic residues: residues 950 to 972 (HGVDGGEEKPSGKSSQRKSEKSQ) and 1133 to 1143 (KEPDGKAHSEE). Acidic residues-rich tracts occupy residues 1160 to 1170 (DLSDIASSEDM) and 1178 to 1187 (NDEEDVETEP). Over residues 1194–1209 (LSALSKDSSSDGGDSL) the composition is skewed to low complexity.

This sequence belongs to the krueppel C2H2-type zinc-finger protein family.

It is found in the nucleus. In terms of biological role, transcriptional repressor that negatively regulates neuron differentiation by repressing retinoic acid-induced gene transcription. Binds and interrupts RARA from binding to retinoic acid response elements (RARE) composed of tandem 5'-AGGTCA-3' sites known as DR1-DR5. Recognizes and binds 2 copies of the core DNA sequence 5'-CCCCCA-3'. This chain is Zinc finger protein 536 (ZNF536), found in Homo sapiens (Human).